We begin with the raw amino-acid sequence, 174 residues long: Peptide deformylase (174 aa).

Cysteine 94 and histidine 136 together coordinate Fe cation. Glutamate 137 is a catalytic residue. Position 140 (histidine 140) interacts with Fe cation.

It belongs to the polypeptide deformylase family. The cofactor is Fe(2+).

It catalyses the reaction N-terminal N-formyl-L-methionyl-[peptide] + H2O = N-terminal L-methionyl-[peptide] + formate. Functionally, removes the formyl group from the N-terminal Met of newly synthesized proteins. Requires at least a dipeptide for an efficient rate of reaction. N-terminal L-methionine is a prerequisite for activity but the enzyme has broad specificity at other positions. This Rhizobium meliloti (strain 1021) (Ensifer meliloti) protein is Peptide deformylase.